The primary structure comprises 376 residues: Proteasome-interacting protein CIC1 (376 aa).

Disordered regions lie at residues Met-1–Ser-29 and Arg-356–Ser-376. The tract at residues Glu-310 to Ser-376 is required for interaction with CDC4. Positions Ser-357 to Ser-376 are enriched in basic and acidic residues.

Interacts with CDC4, PRE4, PRE6, RPT1 and SCL1 as part of the fully assembled 26S proteasome. Interacts with pre-ribosomal particles constituent NOP7.

It localises to the nucleus. It is found in the nucleolus. In terms of biological role, an adapter protein that specifically links the 26S proteasome to its substrate CDC4 which is one of the substrate recognition subunits of the SCF E3 ubiquitin ligase complex. Required for turnover of cell cycle regulatory proteins CDC4 and GRR1. Required for synthesis and nuclear export of 60S ribosomal subunits. Required for vegetative growth. This is Proteasome-interacting protein CIC1 (CIC1) from Saccharomyces cerevisiae (strain ATCC 204508 / S288c) (Baker's yeast).